Here is a 312-residue protein sequence, read N- to C-terminus: Fibrinogen-like protein 1 (312 aa).

The N-terminal stretch at 1-22 is a signal peptide; it reads MAKVFSFILVTTALTMGREISA. Positions 23-61 form a coiled coil; the sequence is LEDCAQEQMRLRAQVRLLETRVKQQQVKIKQLLQENEVQ. Residues 74–306 enclose the Fibrinogen C-terminal domain; that stretch reads LGSKRQYADC…SVVMKIRPND (233 aa). Disulfide bonds link cysteine 83–cysteine 112 and cysteine 248–cysteine 261.

In terms of assembly, homodimer. Interacts (via the Fibrinogen C-terminal domain) with LAG3 (via Ig-like domains 1 and 2). Under normal conditions, liver-specific.

The protein localises to the secreted. Immune suppressive molecule that inhibits antigen-specific T-cell activation by acting as a major ligand of LAG3. Responsible for LAG3 T-cell inhibitory function. Binds LAG3 independently from MHC class II (MHC-II). Secreted by, and promotes growth of, hepatocytes. The chain is Fibrinogen-like protein 1 from Homo sapiens (Human).